A 119-amino-acid polypeptide reads, in one-letter code: C-C motif chemokine 24 (119 aa).

The N-terminal stretch at 1–26 (MAGLATFVVSLLLVTLCAHCIDPAGS) is a signal peptide. 2 cysteine pairs are disulfide-bonded: cysteine 33–cysteine 58 and cysteine 34–cysteine 74. Residues asparagine 54 and asparagine 115 are each glycosylated (N-linked (GlcNAc...) asparagine).

This sequence belongs to the intercrine beta (chemokine CC) family.

It localises to the secreted. Chemotactic for resting T-lymphocytes, and eosinophils. Has lower chemotactic activity for neutrophils but none for monocytes and activated lymphocytes. Is a strong suppressor of colony formation by a multipotential hematopoietic progenitor cell line. Binds to CCR3. The polypeptide is C-C motif chemokine 24 (Canis lupus familiaris (Dog)).